Consider the following 891-residue polypeptide: Dynein axonemal intermediate chain 3 (891 aa).

Residues methionine 1–lysine 17 show a composition bias toward basic residues. A disordered region spans residues methionine 1 to alanine 22. WD repeat units lie at residues glutamate 395–glutamate 435, glycine 477–proline 533, isoleucine 670–leucine 709, and cysteine 713–alanine 753. Residues leucine 818 to aspartate 861 adopt a coiled-coil conformation.

In terms of assembly, interacts with ACTR2; this interaction reduces binding of the Arp2/3 complex to the VCA domain of nucleation promoting factors. Part of the multisubunit axonemal dynein complex formed at least of two heavy chains and a number of intermediate and light chains. Found in a associated with the catalytic heavy chain DNAH2, the intermediate chain DNAI4, and the light chain DYNLT1.

Its subcellular location is the cytoplasm. Its function is as follows. Acts as a negative regulator of cell migration, invasion, and metastasis downstream of p53/TP53, through inhibition of Arp2/3 complex-mediated actin polymerization. Via its association with the multisubunit axonemal dynein complex, is potentially involved in the regulation of cilia function. May play a role in osteogenesis of dental tissue-derived mesenchymal stem cells. This is Dynein axonemal intermediate chain 3 from Homo sapiens (Human).